Consider the following 572-residue polypeptide: Dityrosine transporter 1 (572 aa).

Disordered regions lie at residues 1 to 28 (MGSE…STFH) and 49 to 95 (RANI…SPDT). Over 1-110 (MGSEPFQKKN…YTYFSKDQRL (110 aa)) the chain is Cytoplasmic. The segment covering 13-28 (LQINSQESGTTRSTFH) has biased composition (polar residues). Residues 50 to 62 (ANIDHDVFHEHPD) show a composition bias toward basic and acidic residues. The span at 83-95 (SSNSQSRDPSPDT) shows a compositional bias: polar residues. The chain crosses the membrane as a helical span at residues 111–131 (IIFGIIIFIGFLGPMSGNIYI). Residues 132-149 (PALPLLQREYDVSATTIN) are Extracellular-facing. A helical membrane pass occupies residues 150 to 170 (ATVSVFMAVFSVGPLFWGALA). Over 171-184 (DFGGRKFLYMVSLS) the chain is Cytoplasmic. Residues 185-205 (LMLIVNILLAAVPVNIAALFV) traverse the membrane as a helical segment. The Extracellular portion of the chain corresponds to 206 to 207 (LR). Residues 208–228 (IFQAFASSSVISLGAGTVTDV) form a helical membrane-spanning segment. Residues 229-240 (VPPKHRGKAIAY) are Cytoplasmic-facing. The helical transmembrane segment at 241–261 (FMMGPNMGPIIAPIVAGLILM) threads the bilayer. The Extracellular segment spans residues 262-267 (KGNYWR). A helical membrane pass occupies residues 268 to 288 (WLFGFTSIMTGIALILVTALL). The Cytoplasmic portion of the chain corresponds to 289 to 366 (PETLRCIVGN…TLYWKMIKCP (78 aa)). A helical transmembrane segment spans residues 367-387 (PIIITSVSTALLFSSYYAFSV). At 388–398 (TFSYYLEHDYR) the chain is on the extracellular side. The helical transmembrane segment at 399–419 (FTMLEIGAAYVCPGVAMLLGS) threads the bilayer. Over 420 to 446 (QSGGHLSDYLRSRWIKSHPKKKFPAEF) the chain is Cytoplasmic. Residues 447-469 (RLLLNLIGILLTICGTIGYGWAI) traverse the membrane as a helical segment. Residues 470 to 472 (FFH) are Extracellular-facing. The chain crosses the membrane as a helical span at residues 473-493 (YHFVVLLVFSALTAFGMTWCS). The Cytoplasmic segment spans residues 494 to 520 (NTSMTYLTELFPKRAAGTVAVSSFFRN). The helical transmembrane segment at 521-541 (VGAAISSAIILQLCNAMGIGW) threads the bilayer. Residue C542 is a topological domain, extracellular. Residues 543-563 (FTGLGLCSSISLIGILYLLIF) traverse the membrane as a helical segment. The required for the localization to the prospore membrane stretch occupies residues 548 to 572 (LCSSISLIGILYLLIFQRKYTAKEF). The Cytoplasmic segment spans residues 564 to 572 (QRKYTAKEF).

This sequence belongs to the major facilitator superfamily. CAR1 family. Phosphorylated.

It is found in the prospore membrane. In terms of biological role, prospore-specific dityrosine transporter responsible for translocation of dityrosine through the prospore membrane and required for the formation of the outermost layer of the spore. In Saccharomyces cerevisiae (strain ATCC 204508 / S288c) (Baker's yeast), this protein is Dityrosine transporter 1 (DTR1).